Consider the following 197-residue polypeptide: A-type ATP synthase subunit E 2 (197 aa).

The protein belongs to the V-ATPase E subunit family. Has multiple subunits with at least A(3), B(3), C, D, E, F, H, I and proteolipid K(x).

It localises to the cell membrane. Its function is as follows. Component of the A-type ATP synthase that produces ATP from ADP in the presence of a proton gradient across the membrane. The sequence is that of A-type ATP synthase subunit E 2 from Methanospirillum hungatei JF-1 (strain ATCC 27890 / DSM 864 / NBRC 100397 / JF-1).